The sequence spans 444 residues: Ribosomal protein uS12 methylthiotransferase RimO (444 aa).

In terms of domain architecture, MTTase N-terminal spans 3-119 (IKIGLVSLGC…IARAVRRVLE (117 aa)). Residues Cys-12, Cys-48, Cys-82, Cys-156, Cys-160, and Cys-163 each contribute to the [4Fe-4S] cluster site. Residues 142-372 (ATPPYTAYLK…MMLQQEISLQ (231 aa)) form the Radical SAM core domain. Residues 375–444 (LKRVGEVIEV…EYDLTGETVL (70 aa)) form the TRAM domain.

It belongs to the methylthiotransferase family. RimO subfamily. The cofactor is [4Fe-4S] cluster.

The protein resides in the cytoplasm. It carries out the reaction L-aspartate(89)-[ribosomal protein uS12]-hydrogen + (sulfur carrier)-SH + AH2 + 2 S-adenosyl-L-methionine = 3-methylsulfanyl-L-aspartate(89)-[ribosomal protein uS12]-hydrogen + (sulfur carrier)-H + 5'-deoxyadenosine + L-methionine + A + S-adenosyl-L-homocysteine + 2 H(+). Its function is as follows. Catalyzes the methylthiolation of an aspartic acid residue of ribosomal protein uS12. The chain is Ribosomal protein uS12 methylthiotransferase RimO from Pelotomaculum thermopropionicum (strain DSM 13744 / JCM 10971 / SI).